We begin with the raw amino-acid sequence, 412 residues long: tRNA pseudouridine synthase Pus10 (412 aa).

One can recognise a THUMP domain in the interval 73 to 197 (HEPSIKFLSN…TGSVEVQIMP (125 aa)). Substrate-binding residues include tyrosine 308 and tyrosine 376.

Belongs to the pseudouridine synthase Pus10 family.

It catalyses the reaction uridine(54) in tRNA = pseudouridine(54) in tRNA. The enzyme catalyses uridine(55) in tRNA = pseudouridine(55) in tRNA. Functionally, responsible for synthesis of pseudouridine from uracil-54 and uracil-55 in the psi GC loop of transfer RNAs. This is tRNA pseudouridine synthase Pus10 from Vulcanisaeta distributa (strain DSM 14429 / JCM 11212 / NBRC 100878 / IC-017).